A 433-amino-acid chain; its full sequence is Signal recognition particle 54 kDa protein (433 aa).

Residues 100–107 (GLQGSGKT), 180–184 (DTAGR), and 238–241 (TKFD) each bind GTP.

This sequence belongs to the GTP-binding SRP family. SRP54 subfamily. Part of the signal recognition particle protein translocation system, which is composed of SRP and FtsY. Archaeal SRP consists of a 7S RNA molecule of 300 nucleotides and two protein subunits: SRP54 and SRP19.

It is found in the cytoplasm. The enzyme catalyses GTP + H2O = GDP + phosphate + H(+). In terms of biological role, involved in targeting and insertion of nascent membrane proteins into the cytoplasmic membrane. Binds to the hydrophobic signal sequence of the ribosome-nascent chain (RNC) as it emerges from the ribosomes. The SRP-RNC complex is then targeted to the cytoplasmic membrane where it interacts with the SRP receptor FtsY. This chain is Signal recognition particle 54 kDa protein, found in Archaeoglobus fulgidus (strain ATCC 49558 / DSM 4304 / JCM 9628 / NBRC 100126 / VC-16).